Consider the following 996-residue polypeptide: PDZ domain-containing protein C23G3.12c (996 aa).

The disordered stretch occupies residues 1–35 (MSIKKRARAGSKSDDIGNKTPKKNGIEHEATKSSE). PDZ domains follow at residues 280 to 358 (SRLG…QRGS), 745 to 827 (EFRA…LREG), and 860 to 930 (RAVR…STFD). The tract at residues 972–996 (KNPSMGFTIDEEVDDNTFDTEGEQQ) is disordered. Acidic residues predominate over residues 980-996 (IDEEVDDNTFDTEGEQQ).

The protein belongs to the peptidase S1C family.

This Schizosaccharomyces pombe (strain 972 / ATCC 24843) (Fission yeast) protein is PDZ domain-containing protein C23G3.12c.